The sequence spans 295 residues: Probable protein phosphatase 2C 5 (295 aa).

One can recognise a PPM-type phosphatase domain in the interval 23 to 294; the sequence is QYAATHMQGW…DNMTCILVLF (272 aa). Mn(2+)-binding residues include Asp-57 and Gly-58. The tract at residues 151-170 is disordered; the sequence is NRDGKPFDMSKDHKPDDDQE. Mn(2+)-binding residues include Asp-237 and Asp-285.

It belongs to the PP2C family. Mg(2+) is required as a cofactor. The cofactor is Mn(2+).

The protein resides in the membrane. It catalyses the reaction O-phospho-L-seryl-[protein] + H2O = L-seryl-[protein] + phosphate. It carries out the reaction O-phospho-L-threonyl-[protein] + H2O = L-threonyl-[protein] + phosphate. Functionally, enzyme with a broad specificity. The polypeptide is Probable protein phosphatase 2C 5 (Paramecium tetraurelia).